The following is a 217-amino-acid chain: Adenylate kinase (217 aa).

Residue 10-15 coordinates ATP; that stretch reads GAGKGT. Residues 30–59 are NMP; that stretch reads STGDMFREAVAAGTELGVKVQNILSSGALV. Residues Thr-31, Arg-36, 57–59, 85–88, and Gln-92 each bind AMP; these read ALV and GYPR. Residues 126–163 are LID; sequence SRRICPKCGKIYNLISMPPVSDQICDDCGEQLVIREDD. Arg-127 is an ATP binding site. Zn(2+) is bound by residues Cys-130 and Cys-133. ATP is bound at residue 136 to 137; the sequence is IY. Zn(2+) is bound by residues Cys-150 and Cys-153. AMP contacts are provided by Arg-160 and Arg-171. Arg-199 lines the ATP pocket.

It belongs to the adenylate kinase family. In terms of assembly, monomer.

The protein localises to the cytoplasm. The catalysed reaction is AMP + ATP = 2 ADP. The protein operates within purine metabolism; AMP biosynthesis via salvage pathway; AMP from ADP: step 1/1. In terms of biological role, catalyzes the reversible transfer of the terminal phosphate group between ATP and AMP. Plays an important role in cellular energy homeostasis and in adenine nucleotide metabolism. The chain is Adenylate kinase from Pseudothermotoga lettingae (strain ATCC BAA-301 / DSM 14385 / NBRC 107922 / TMO) (Thermotoga lettingae).